A 317-amino-acid chain; its full sequence is Zinc transporter ZIP3 (317 aa).

At 1 to 3 the chain is on the extracellular side; it reads MTK. A helical transmembrane segment spans residues 4–24; that stretch reads LLVAKVLCMVGVFFFMLLGSL. Over 25 to 42 the chain is Cytoplasmic; that stretch reads LPVKVIEADLEKAHRSKK. Residues 43-63 traverse the membrane as a helical segment; that stretch reads VLSLCNTFGGGVFLATCFNAL. At 64-85 the chain is on the extracellular side; sequence LPAVRDKLQQVLSLGHISTDYP. The helical transmembrane segment at 86-106 threads the bilayer; the sequence is LAETLMMVGFFLTVFVEQLVL. At 107-172 the chain is on the cytoplasmic side; it reads TFRRERPPFI…RELGRPGPLR (66 aa). Phosphoserine is present on residues Ser-125 and Ser-129. Residues 173-193 form a helical membrane-spanning segment; the sequence is LLSLVFALSAHSVFEGLALGL. Residues 194–199 are Extracellular-facing; that stretch reads QEEGER. Residues 200–220 form a helical membrane-spanning segment; that stretch reads VVSLFVGVAIHETLVAVALGI. Residues 221–232 are Cytoplasmic-facing; that stretch reads SMARSAVPLRDA. The chain crosses the membrane as a helical span at residues 233–253; it reads AKLAVTVSAMIPVGIGLGLGI. Over 254–265 the chain is Extracellular; the sequence is ESARSVASSVAS. A helical transmembrane segment spans residues 266–286; sequence ALLQGLAGGTFLFVTFLEILA. At 287 to 294 the chain is on the cytoplasmic side; the sequence is KELEERSE. A helical membrane pass occupies residues 295 to 315; it reads QLLKVLFLVLGYAVLAGMVFL. Topologically, residues 316–317 are extracellular; the sequence is KW.

Belongs to the ZIP transporter (TC 2.A.5) family. As to expression, highly expressed in the testes. Highly expressed in dentate gyrus granule cells of the hippocampus. Expressed in the mammary gland.

It localises to the cell membrane. The protein resides in the apical cell membrane. The enzyme catalyses Zn(2+)(in) = Zn(2+)(out). In terms of biological role, transporter for the divalent cation Zn(2+). Mediates the influx of Zn(2+) into cells from extracellular space. Controls Zn(2+) accumulation into dentate gyrus granule cells in the hippocampus. Mediates Zn(2+) reuptake from the secreted milk within the alveolar lumen. This is Zinc transporter ZIP3 (Slc39a3) from Mus musculus (Mouse).